A 154-amino-acid chain; its full sequence is Ribonuclease H (154 aa).

The 142-residue stretch at 7 to 148 (KPETVEIYTD…ADALAREGIA (142 aa)) folds into the RNase H type-1 domain. Mg(2+)-binding residues include D16, E54, D76, and D140.

The protein belongs to the RNase H family. As to quaternary structure, monomer. Mg(2+) is required as a cofactor.

The protein resides in the cytoplasm. The enzyme catalyses Endonucleolytic cleavage to 5'-phosphomonoester.. In terms of biological role, endonuclease that specifically degrades the RNA of RNA-DNA hybrids. The chain is Ribonuclease H from Paramagnetospirillum magneticum (strain ATCC 700264 / AMB-1) (Magnetospirillum magneticum).